A 422-amino-acid polypeptide reads, in one-letter code: Exodeoxyribonuclease 7 large subunit (422 aa).

The protein belongs to the XseA family. As to quaternary structure, heterooligomer composed of large and small subunits.

Its subcellular location is the cytoplasm. The catalysed reaction is Exonucleolytic cleavage in either 5'- to 3'- or 3'- to 5'-direction to yield nucleoside 5'-phosphates.. Bidirectionally degrades single-stranded DNA into large acid-insoluble oligonucleotides, which are then degraded further into small acid-soluble oligonucleotides. This is Exodeoxyribonuclease 7 large subunit from Leptospira interrogans serogroup Icterohaemorrhagiae serovar copenhageni (strain Fiocruz L1-130).